The chain runs to 163 residues: MASTFSFDIVSDFDRQELVNAVDQVIRDIKGRYDLKDTETTVELVEESINVSTDSEFTLDSVHTILREKAAKRNLSQKIFDFGKVESASGNRVRQEIKLKKGISQEIAKQISKLIRDEFKKVQASIQGDAVRVSAKSKDDLQVVMQRLKQEDYPVALQFTNYR.

This sequence belongs to the YajQ family.

In terms of biological role, nucleotide-binding protein. The sequence is that of Nucleotide-binding protein Npun_R4736 from Nostoc punctiforme (strain ATCC 29133 / PCC 73102).